A 391-amino-acid chain; its full sequence is Terminal nucleotidyltransferase 5C (391 aa).

The protein belongs to the TENT family. As to quaternary structure, interacts with BCCIP and PABPC1; the interaction has no effect on TENT5C poly(A) polymerase function. Interacts with PLK4; this interaction leads to the TENT5C recruitment into the centrosome.

The protein localises to the nucleus. Its subcellular location is the cytoplasm. The protein resides in the cytoskeleton. It localises to the microtubule organizing center. It is found in the centrosome. The catalysed reaction is RNA(n) + ATP = RNA(n)-3'-adenine ribonucleotide + diphosphate. Functionally, catalyzes the transfer of one adenosine molecule from an ATP to an mRNA poly(A) tail bearing a 3'-OH terminal group and enhances mRNA stability and gene expression. Can also elongate RNA oligos ending with uridine molecule, provided that the sequence is adenosine-rich. Mainly targets mRNAs encoding endoplasmic reticulum-targeted protein. Its function is as follows. (Microbial infection) Seems to enhance replication of some viruses, including yellow fever virus, in response to type I interferon. This chain is Terminal nucleotidyltransferase 5C, found in Homo sapiens (Human).